Here is a 136-residue protein sequence, read N- to C-terminus: MLDQLTLCLLLNFLCANVLANTSVFNPCVSQNELSEYEAHQVMENWPVPPIDRAYKCFLTCVLLDLGLIDERGNVQIDKYMKSGVVDWQWVAIELVTCRIEFSDERDLCELSYGIFNCFKDVKLAAEKYVSISNAK.

The first 20 residues, Met1–Ala20, serve as a signal peptide directing secretion. 3 disulfides stabilise this stretch: Cys28–Cys61, Cys57–Cys109, and Cys98–Cys118.

It belongs to the PBP/GOBP family.

In terms of biological role, present in the aqueous fluid surrounding olfactory sensory dendrites and are thought to aid in the capture and transport of hydrophobic odorants into and through this fluid. This Drosophila melanogaster (Fruit fly) protein is General odorant-binding protein 57e.